Consider the following 167-residue polypeptide: Transcription antitermination protein NusB (167 aa).

Residues 1–21 (MIPTDTAPPSKPAQGHKGYKN) form a disordered region.

The protein belongs to the NusB family.

In terms of biological role, involved in transcription antitermination. Required for transcription of ribosomal RNA (rRNA) genes. Binds specifically to the boxA antiterminator sequence of the ribosomal RNA (rrn) operons. This is Transcription antitermination protein NusB from Nitrosomonas eutropha (strain DSM 101675 / C91 / Nm57).